A 264-amino-acid polypeptide reads, in one-letter code: 3-methyl-2-oxobutanoate hydroxymethyltransferase (264 aa).

The Mg(2+) site is built by aspartate 42 and aspartate 81. 3-methyl-2-oxobutanoate is bound by residues 42–43 (DS), aspartate 81, and lysine 110. Position 112 (glutamate 112) interacts with Mg(2+). Glutamate 179 acts as the Proton acceptor in catalysis.

The protein belongs to the PanB family. In terms of assembly, homodecamer; pentamer of dimers. Requires Mg(2+) as cofactor.

It localises to the cytoplasm. The catalysed reaction is 3-methyl-2-oxobutanoate + (6R)-5,10-methylene-5,6,7,8-tetrahydrofolate + H2O = 2-dehydropantoate + (6S)-5,6,7,8-tetrahydrofolate. The protein operates within cofactor biosynthesis; (R)-pantothenate biosynthesis; (R)-pantoate from 3-methyl-2-oxobutanoate: step 1/2. Catalyzes the reversible reaction in which hydroxymethyl group from 5,10-methylenetetrahydrofolate is transferred onto alpha-ketoisovalerate to form ketopantoate. This is 3-methyl-2-oxobutanoate hydroxymethyltransferase from Francisella tularensis subsp. tularensis (strain FSC 198).